Reading from the N-terminus, the 410-residue chain is Peptidase T (410 aa).

H79 is a Zn(2+) binding site. The active site involves D81. D142 contributes to the Zn(2+) binding site. E176 (proton acceptor) is an active-site residue. Zn(2+)-binding residues include E177, D199, and H381.

It belongs to the peptidase M20B family. Zn(2+) is required as a cofactor.

The protein resides in the cytoplasm. It catalyses the reaction Release of the N-terminal residue from a tripeptide.. Cleaves the N-terminal amino acid of tripeptides. The sequence is that of Peptidase T from Bacillus cereus (strain B4264).